Here is an 85-residue protein sequence, read N- to C-terminus: MSSGGLLLLLGLLTLWTELTPVSSRERHPDCDKPPDTGRCRKNVRAFYYKPSAKRCVQFIYGGCNANGNHFKSDHLCRCECLEYP.

An N-terminal signal peptide occupies residues 1–24 (MSSGGLLLLLGLLTLWTELTPVSS). The BPTI/Kunitz inhibitor domain maps to 31–81 (CDKPPDTGRCRKNVRAFYYKPSAKRCVQFIYGGCNANGNHFKSDHLCRCEC). Disulfide bonds link Cys31–Cys81, Cys40–Cys64, and Cys56–Cys77.

Belongs to the venom Kunitz-type family. As to quaternary structure, heterodimer; disulfide-linked. The A chains have phospholipase A2 activity and the B chains show homology with the basic protease inhibitors. As to expression, expressed by the venom gland.

The protein localises to the secreted. In terms of biological role, beta-1-bungarotoxin is a presynaptic neurotoxin of the venom. The B chain is homologous to venom basic protease inhibitors but has no protease inhibitor activity and blocks voltage-gated potassium channels (Kv). This is Kunitz-type serine protease inhibitor homolog beta-bungarotoxin BF B1 chain from Bungarus fasciatus (Banded krait).